Reading from the N-terminus, the 559-residue chain is 2,3-bisphosphoglycerate-independent phosphoglycerate mutase (559 aa).

2 residues coordinate Mn(2+): Asp28 and Ser81. Ser81 acts as the Phosphoserine intermediate in catalysis. Substrate-binding positions include His140, 170 to 171 (RD), Arg206, Arg213, 286 to 289 (RADR), and Lys361. Residues Asp430, His434, Asp471, His472, and His501 each coordinate Mn(2+).

Belongs to the BPG-independent phosphoglycerate mutase family. Monomer. Mn(2+) serves as cofactor.

It is found in the cytoplasm. It catalyses the reaction (2R)-2-phosphoglycerate = (2R)-3-phosphoglycerate. The protein operates within carbohydrate degradation; glycolysis; pyruvate from D-glyceraldehyde 3-phosphate: step 3/5. In terms of biological role, catalyzes the interconversion of 2-phosphoglycerate and 3-phosphoglycerate. This chain is 2,3-bisphosphoglycerate-independent phosphoglycerate mutase (PGM1), found in Mesembryanthemum crystallinum (Common ice plant).